Consider the following 245-residue polypeptide: Dehydrogenase/reductase SDR family member 6 (245 aa).

NAD(+) contacts are provided by residues 16-18 (QGI), Asp-37, and Asp-58. Arg-144 is a substrate binding site. Tyr-147 functions as the Proton acceptor in the catalytic mechanism. NAD(+)-binding positions include Lys-151 and 180 to 184 (VDTPS). Residues Arg-188 and Arg-205 each coordinate substrate.

This sequence belongs to the short-chain dehydrogenases/reductases (SDR) family. In terms of assembly, homotetramer. In terms of tissue distribution, detected in liver, spleen and macrophages. Widely expressed.

The protein localises to the cytoplasm. The enzyme catalyses cis-4-hydroxy-L-proline + NAD(+) = 4-oxo-L-proline + NADH + H(+). The catalysed reaction is (R)-3-hydroxybutanoate + NAD(+) = acetoacetate + NADH + H(+). Its pathway is amino-acid metabolism. It functions in the pathway siderophore biosynthesis. Its function is as follows. NAD(H)-dependent dehydrogenase/reductase with a preference for cyclic substrates. Catalyzes stereoselective conversion of 4-oxo-L-proline to cis-4-hydroxy-L-proline, likely a detoxification mechanism for ketoprolines. Mediates the formation of 2,5-dihydroxybenzoate (2,5-DHBA), a siderophore that chelates free cytoplasmic iron and associates with LCN2, thereby regulating iron transport and homeostasis while protecting cells against free radical-induced oxidative stress. The iron-siderophore complex is imported into mitochondria, providing an iron source for mitochondrial metabolic processes in particular heme synthesis. May act as a 3-hydroxybutyrate dehydrogenase. Functionally, (Microbial infection) May play a role in susceptibility to bacterial infection by providing an assimilable source of iron that is exploited by pathogenic bacteria. Host iron-siderophore complexes can be used by bacteria to promote their own growth and pathogenicity. This chain is Dehydrogenase/reductase SDR family member 6, found in Mus musculus (Mouse).